The sequence spans 61 residues: Photosystem II reaction center protein K (61 aa).

A propeptide spanning residues 1–24 is cleaved from the precursor; the sequence is MPNILSLTCICFNSVIYPTSFFFA. The chain crosses the membrane as a helical span at residues 32-52; sequence IFNPIVDFMPVIPLFFFLLAF.

Belongs to the PsbK family. As to quaternary structure, PSII is composed of 1 copy each of membrane proteins PsbA, PsbB, PsbC, PsbD, PsbE, PsbF, PsbH, PsbI, PsbJ, PsbK, PsbL, PsbM, PsbT, PsbX, PsbY, PsbZ, Psb30/Ycf12, at least 3 peripheral proteins of the oxygen-evolving complex and a large number of cofactors. It forms dimeric complexes.

It localises to the plastid. The protein localises to the chloroplast thylakoid membrane. Functionally, one of the components of the core complex of photosystem II (PSII). PSII is a light-driven water:plastoquinone oxidoreductase that uses light energy to abstract electrons from H(2)O, generating O(2) and a proton gradient subsequently used for ATP formation. It consists of a core antenna complex that captures photons, and an electron transfer chain that converts photonic excitation into a charge separation. This chain is Photosystem II reaction center protein K, found in Triticum aestivum (Wheat).